Reading from the N-terminus, the 112-residue chain is UPF0060 membrane protein Mpe_A1656 (112 aa).

4 helical membrane passes run 9-29 (GLFFVTAVAEIVGCYLPWLVL), 34-54 (SAWLLVPAAASLAVFAWLLTL), 65-85 (AYGGVYVVVALLWLWRVDGVV), and 91-111 (LVGGAICLAGMAIIALQPRAA).

The protein belongs to the UPF0060 family.

It localises to the cell inner membrane. The sequence is that of UPF0060 membrane protein Mpe_A1656 from Methylibium petroleiphilum (strain ATCC BAA-1232 / LMG 22953 / PM1).